We begin with the raw amino-acid sequence, 509 residues long: Kynureninase 1 (509 aa).

Pyridoxal 5'-phosphate-binding positions include leucine 169, threonine 170, 197–200 (FPSD), aspartate 283, histidine 286, and tyrosine 308. The residue at position 309 (lysine 309) is an N6-(pyridoxal phosphate)lysine. Positions 349 and 377 each coordinate pyridoxal 5'-phosphate.

It belongs to the kynureninase family. As to quaternary structure, homodimer. Pyridoxal 5'-phosphate serves as cofactor.

It is found in the cytoplasm. The catalysed reaction is L-kynurenine + H2O = anthranilate + L-alanine + H(+). It catalyses the reaction 3-hydroxy-L-kynurenine + H2O = 3-hydroxyanthranilate + L-alanine + H(+). It functions in the pathway amino-acid degradation; L-kynurenine degradation; L-alanine and anthranilate from L-kynurenine: step 1/1. The protein operates within cofactor biosynthesis; NAD(+) biosynthesis; quinolinate from L-kynurenine: step 2/3. Catalyzes the cleavage of L-kynurenine (L-Kyn) and L-3-hydroxykynurenine (L-3OHKyn) into anthranilic acid (AA) and 3-hydroxyanthranilic acid (3-OHAA), respectively. The protein is Kynureninase 1 (bna5-1) of Aspergillus fumigatus (strain CBS 144.89 / FGSC A1163 / CEA10) (Neosartorya fumigata).